A 541-amino-acid chain; its full sequence is Valine N-monooxygenase 2 (541 aa).

The Cytoplasmic segment spans residues Met1–Thr18. A helical transmembrane segment spans residues Ser19 to Ile41. Topologically, residues Lys42–Pro541 are lumenal. Residue Asn277 is glycosylated (N-linked (GlcNAc...) asparagine). Position 477 (Cys477) interacts with heme. Asn505 carries an N-linked (GlcNAc...) asparagine glycan.

The protein belongs to the cytochrome P450 family. It depends on heme as a cofactor. As to expression, expressed in the epidermis, the next two cortex cell layers, the endodermis and the pericycle of leaf petioles. Strong expression around the laticifers among the phloem cells and in parenchymatic cells between the protoxylem and the metaxylem cells. In the leaves, preferentially expressed in the mesophyll cells adjacent to the epidermis.

It is found in the microsome membrane. The catalysed reaction is L-valine + 2 reduced [NADPH--hemoprotein reductase] + 2 O2 = (E)-2-methylpropanal oxime + 2 oxidized [NADPH--hemoprotein reductase] + CO2 + 3 H2O + 2 H(+). It catalyses the reaction L-valine + reduced [NADPH--hemoprotein reductase] + O2 = N-hydroxy-L-valine + oxidized [NADPH--hemoprotein reductase] + H2O + 2 H(+). The enzyme catalyses N-hydroxy-L-valine + reduced [NADPH--hemoprotein reductase] + O2 = N,N-dihydroxy-L-valine + oxidized [NADPH--hemoprotein reductase] + H2O + H(+). It carries out the reaction L-isoleucine + 2 reduced [NADPH--hemoprotein reductase] + 2 O2 = (1E,2S)-2-methylbutanal oxime + 2 oxidized [NADPH--hemoprotein reductase] + CO2 + 3 H2O + 2 H(+). The catalysed reaction is L-isoleucine + reduced [NADPH--hemoprotein reductase] + O2 = N-hydroxy-L-isoleucine + oxidized [NADPH--hemoprotein reductase] + H2O + 2 H(+). It catalyses the reaction N-hydroxy-L-isoleucine + reduced [NADPH--hemoprotein reductase] + O2 = N,N-dihydroxy-L-isoleucine + oxidized [NADPH--hemoprotein reductase] + H2O + H(+). Involved in the biosynthesis of the cyanogenic glucosides linamarin and lotaustralin. Can use L-valine or L-isoleucine as substrate. Catalyzes multi-step reactions starting with two successive N-hydroxylations using L-valine and L-isoleucine as substrates leading to the formation of N,N-dihydroxy-L-valine and N,N-dihydroxy-L-isoleucine, respectively; following spontaneous reactions lead to the production of (E)-2-methylpropanal oxime and (1E,2S)-2-methylbutanal oxime, respectively. In Manihot esculenta (Cassava), this protein is Valine N-monooxygenase 2.